The chain runs to 225 residues: Peptidyl-prolyl cis-trans isomerase D (225 aa).

An N-terminal signal peptide occupies residues 1-22 (MKLQFFSFITLFACLFTTAIFA). The 159-residue stretch at 37–195 (YFDINHGDKQ…KEVIIVESGE (159 aa)) folds into the PPIase cyclophilin-type domain. Asn-139 carries N-linked (GlcNAc...) asparagine glycosylation. The Prevents secretion from ER signature appears at 222-225 (HDEL).

It belongs to the cyclophilin-type PPIase family. PPIase B subfamily.

The protein resides in the endoplasmic reticulum lumen. The catalysed reaction is [protein]-peptidylproline (omega=180) = [protein]-peptidylproline (omega=0). Functionally, PPIases accelerate the folding of proteins. It catalyzes the cis-trans isomerization of proline imidic peptide bonds in oligopeptides. This Saccharomyces cerevisiae (strain ATCC 204508 / S288c) (Baker's yeast) protein is Peptidyl-prolyl cis-trans isomerase D.